An 87-amino-acid polypeptide reads, in one-letter code: U3-theraphotoxin-Hhn1n (87 aa).

Residues 1–24 (MVNMKASMFLTFAGLVLLFVVCYA) form the signal peptide. A propeptide spanning residues 25–52 (SESEEKEFPKEMLSSIFAVDNDFKQEER) is cleaved from the precursor. Disulfide bonds link Cys-54–Cys-67, Cys-61–Cys-72, and Cys-66–Cys-79.

The protein belongs to the neurotoxin 10 (Hwtx-1) family. 51 (Hntx-8) subfamily. Hntx-8 sub-subfamily. As to expression, expressed by the venom gland.

Its subcellular location is the secreted. In terms of biological role, weakly inhibits Kv11.1/KCNH2/ERG1, Kv1.2/KCNA2, Kv1.3/KCNA3, and Kv2.1/KCNB1. The polypeptide is U3-theraphotoxin-Hhn1n (Cyriopagopus hainanus (Chinese bird spider)).